We begin with the raw amino-acid sequence, 979 residues long: UPF0182 protein Mb0065 (979 aa).

The next 7 membrane-spanning stretches (helical) occupy residues 19–41 (LVTA…DIYV), 63–85 (LAIV…LLAY), 114–136 (LFGW…FDWV), 174–196 (WLFV…FGGL), 208–230 (AARV…AYWL), 261–280 (LVLV…AIFL), and 285–307 (IPAM…WPLL). Residues 898–948 (GTGRVATAPGGDAASAPPPGAGGPAPPQAVPPPRTTQPPAAPPRGPDVPPA) form a disordered region. Over residues 902-912 (VATAPGGDAAS) the composition is skewed to low complexity. Positions 913–946 (APPPGAGGPAPPQAVPPPRTTQPPAAPPRGPDVP) are enriched in pro residues.

It belongs to the UPF0182 family.

Its subcellular location is the cell membrane. The chain is UPF0182 protein Mb0065 from Mycobacterium bovis (strain ATCC BAA-935 / AF2122/97).